We begin with the raw amino-acid sequence, 1889 residues long: E3 ubiquitin-protein ligase UBR3 (1889 aa).

The disordered stretch occupies residues 1 to 27; that stretch reads MAAAAAAAAVGDPQPPQPEAPAQGLAL. The segment at 118-189 adopts a UBR-type zinc-finger fold; it reads ALCGLVWTAN…ESGFCRRHQI (72 aa). Positions 338–362 are disordered; that stretch reads LGQIDSSDEEDQDGSQGLGKRKRVK. Phosphoserine is present on residues Ser-343 and Ser-344. A run of 2 helical transmembrane segments spans residues 761–781 and 919–939; these read MLEG…HLGM and LLHC…ILMD. Residues 1167–1199 are a coiled coil; the sequence is KKITAAEKKTLDKEERRQKARERQQKLLAEFAS. Ser-1199 is modified (phosphoserine). An RING-type; degenerate zinc finger spans residues 1306–1364; that stretch reads DSSCLLAVSIGWEGGVYVQTCGHTLHIDCHKSYMESLRNDQVLQGFSVDKGEFTCPLCR. A helical membrane pass occupies residues 1807 to 1827; sequence QNCGAGTGIFLLINASVIIII.

The protein belongs to the E3 ubiquitin-protein ligase UBR1-like family. As to quaternary structure, interacts with UBE2A and UBE2B. In terms of tissue distribution, expressed in numerous cells of the smell, touch, vision, hearing and taste senses. Expressed in cells of the olfactory pathway, including the olfactory cell layer of the main olfactory epithelium (MOE), a mitral neuron cell layer of the olfactory bulb (OB), and a pyramidal cell layer of the piriform cortex of the olfactory cortex (OC). Expressed in the vomeronasal sensory epithelium of the vomeronasal organ (VNO) and the mitral cells of the accessory olfactory bulb. Expressed in tactile tissues, including the dorsal root ganglion, trigeminal ganglion and follicle-sinus complexes. Expressed in cells between hair follicle and sinus and also in the region of the rete ridge collar. Expressed in taste buds of the fungiform, circumvallate, and foliate papillae. Expressed in the spiral ganglion, the organ of Corti of the cochlea in the inner ear, in the sensory epithelium of macula and vestibular ganglion of the balancing system (at protein level). Expressed in the liver and skeletal muscle.

It is found in the membrane. It carries out the reaction S-ubiquitinyl-[E2 ubiquitin-conjugating enzyme]-L-cysteine + [acceptor protein]-L-lysine = [E2 ubiquitin-conjugating enzyme]-L-cysteine + N(6)-ubiquitinyl-[acceptor protein]-L-lysine.. It participates in protein modification; protein ubiquitination. Functionally, E3 ubiquitin-protein ligase which is a component of the N-end rule pathway. Does not bind to proteins bearing specific N-terminal residues that are destabilizing according to the N-end rule, leading to their ubiquitination and subsequent degradation. May play a role in Shh signaling by mediating the ubiquitination of Kif7. May be important for MYH9 function in certain tissues, possibly by regulating the ubiquitination of MYH9 and consequently affecting its interaction with MYO7A. The polypeptide is E3 ubiquitin-protein ligase UBR3 (Ubr3) (Mus musculus (Mouse)).